The primary structure comprises 618 residues: uncharacterized protein (618 aa).

4 disordered regions span residues 70–118 (SSEY…SLPR), 330–352 (LTAR…EVPC), 456–552 (TLPV…PILT), and 587–618 (IPSD…LKTL). 2 stretches are compositionally biased toward basic and acidic residues: residues 74-84 (KGTRRDSRGYE) and 333-343 (RTEEEPERHVP). Low complexity predominate over residues 463 to 481 (TSRPQSPSSLSSKTTGLPL). Composition is skewed to polar residues over residues 485–516 (KPTS…NSLM) and 609–618 (SDPSHSLKTL).

This is an uncharacterized protein from Danio rerio (Zebrafish).